A 215-amino-acid chain; its full sequence is Cytochrome b6 (215 aa).

The chain crosses the membrane as a helical span at residues 32–52; the sequence is IFYCLGGITLTCFLVQVATGF. A heme c-binding site is contributed by cysteine 35. The heme b site is built by histidine 86 and histidine 100. A run of 3 helical transmembrane segments spans residues 90–110, 116–136, and 186–206; these read ASMM…TGGF, LTWV…VTGY, and LHTF…FPMI. Heme b is bound by residues histidine 187 and histidine 202.

This sequence belongs to the cytochrome b family. PetB subfamily. In terms of assembly, the 4 large subunits of the cytochrome b6-f complex are cytochrome b6, subunit IV (17 kDa polypeptide, PetD), cytochrome f and the Rieske protein, while the 4 small subunits are PetG, PetL, PetM and PetN. The complex functions as a dimer. Heme b serves as cofactor. Heme c is required as a cofactor.

It localises to the plastid. Its subcellular location is the chloroplast thylakoid membrane. Component of the cytochrome b6-f complex, which mediates electron transfer between photosystem II (PSII) and photosystem I (PSI), cyclic electron flow around PSI, and state transitions. This chain is Cytochrome b6, found in Nicotiana tomentosiformis (Tobacco).